We begin with the raw amino-acid sequence, 511 residues long: Histidine ammonia-lyase (511 aa).

The 5-imidazolinone (Ala-Gly) cross-link spans 144–146 (ASG). Serine 145 bears the 2,3-didehydroalanine (Ser) mark.

It belongs to the PAL/histidase family. Contains an active site 4-methylidene-imidazol-5-one (MIO), which is formed autocatalytically by cyclization and dehydration of residues Ala-Ser-Gly.

It localises to the cytoplasm. It catalyses the reaction L-histidine = trans-urocanate + NH4(+). Its pathway is amino-acid degradation; L-histidine degradation into L-glutamate; N-formimidoyl-L-glutamate from L-histidine: step 1/3. The chain is Histidine ammonia-lyase from Halalkalibacterium halodurans (strain ATCC BAA-125 / DSM 18197 / FERM 7344 / JCM 9153 / C-125) (Bacillus halodurans).